Consider the following 264-residue polypeptide: Thymidylate synthase (264 aa).

Residue arginine 21 participates in dUMP binding. Residue histidine 51 coordinates (6R)-5,10-methylene-5,6,7,8-tetrahydrofolate. 126–127 (RR) serves as a coordination point for dUMP. The active-site Nucleophile is cysteine 146. Residues 166–169 (RSCD), asparagine 177, and 207–209 (HLY) each bind dUMP. Aspartate 169 contacts (6R)-5,10-methylene-5,6,7,8-tetrahydrofolate. A (6R)-5,10-methylene-5,6,7,8-tetrahydrofolate-binding site is contributed by alanine 263.

Belongs to the thymidylate synthase family. Bacterial-type ThyA subfamily. As to quaternary structure, homodimer.

It localises to the cytoplasm. It carries out the reaction dUMP + (6R)-5,10-methylene-5,6,7,8-tetrahydrofolate = 7,8-dihydrofolate + dTMP. The protein operates within pyrimidine metabolism; dTTP biosynthesis. In terms of biological role, catalyzes the reductive methylation of 2'-deoxyuridine-5'-monophosphate (dUMP) to 2'-deoxythymidine-5'-monophosphate (dTMP) while utilizing 5,10-methylenetetrahydrofolate (mTHF) as the methyl donor and reductant in the reaction, yielding dihydrofolate (DHF) as a by-product. This enzymatic reaction provides an intracellular de novo source of dTMP, an essential precursor for DNA biosynthesis. This is Thymidylate synthase from Escherichia coli (strain 55989 / EAEC).